Here is a 342-residue protein sequence, read N- to C-terminus: DNA primase small subunit PriS (342 aa).

Catalysis depends on residues aspartate 97, aspartate 99, and aspartate 276.

Belongs to the eukaryotic-type primase small subunit family. Heterodimer of a small subunit (PriS) and a large subunit (PriL). The cofactor is Mg(2+). Mn(2+) is required as a cofactor.

Functionally, catalytic subunit of DNA primase, an RNA polymerase that catalyzes the synthesis of short RNA molecules used as primers for DNA polymerase during DNA replication. The small subunit contains the primase catalytic core and has DNA synthesis activity on its own. Binding to the large subunit stabilizes and modulates the activity, increasing the rate of DNA synthesis while decreasing the length of the DNA fragments, and conferring RNA synthesis capability. The DNA polymerase activity may enable DNA primase to also catalyze primer extension after primer synthesis. May also play a role in DNA repair. This Thermococcus sibiricus (strain DSM 12597 / MM 739) protein is DNA primase small subunit PriS.